We begin with the raw amino-acid sequence, 223 residues long: GRF1-interacting factor 3 (223 aa).

A disordered region spans residues 179–223; it reads ANNAGPNDASGGGKPDGTNMSQSGADGQGGSAARHGGGDAKTEGK. Positions 214–223 are enriched in basic and acidic residues; it reads GGGDAKTEGK.

This sequence belongs to the SS18 family. As to quaternary structure, interacts with GRF1. As to expression, predominantly expressed in shoot tips containing the shoot apical meristem (SAM) and flower buds. Also expressed in mature flowers.

Functionally, transcription coactivator that plays a role in the regulation of cell expansion in leaf and cotyledons tissues. Component of a network formed by miR396, the GRFs and their interacting factors (GIFs) acting in the regulation of meristem function, at least partially through the control of cell proliferation. GIFs are involved in the positive regulation of cell proliferation of lateral organs in a functionally redundant manner. This Arabidopsis thaliana (Mouse-ear cress) protein is GRF1-interacting factor 3 (GIF3).